We begin with the raw amino-acid sequence, 732 residues long: Acylamino-acid-releasing enzyme (732 aa).

M1 is modified (blocked amino end (Met); alternate). M1 is subject to N-acetylmethionine; alternate. 2 positions are modified to phosphoserine: S185 and S187. Residues S587, D675, and H707 each act as charge relay system in the active site.

It belongs to the peptidase S9C family. As to quaternary structure, homotetramer.

It localises to the cytoplasm. The enzyme catalyses Cleavage of an N-acetyl or N-formyl amino acid from the N-terminus of a polypeptide.. Homotetramerization is required for activity. Tetramerization results in the formation of a gated channel which is involved in substrate selection and substrate access to the catalytic sites. This enzyme catalyzes the hydrolysis of the N-terminal peptide bond of an N-acetylated peptide to generate an N-acetylated amino acid and a peptide with a free N-terminus. It preferentially cleaves off Ac-Ala, Ac-Met and Ac-Ser. Also, involved in the degradation of oxidized and glycated proteins. The protein is Acylamino-acid-releasing enzyme (Apeh) of Rattus norvegicus (Rat).